A 178-amino-acid polypeptide reads, in one-letter code: Translation initiation factor IF-3 (178 aa).

Belongs to the IF-3 family. Monomer.

It localises to the cytoplasm. Its function is as follows. IF-3 binds to the 30S ribosomal subunit and shifts the equilibrium between 70S ribosomes and their 50S and 30S subunits in favor of the free subunits, thus enhancing the availability of 30S subunits on which protein synthesis initiation begins. The protein is Translation initiation factor IF-3 of Legionella pneumophila (strain Paris).